A 343-amino-acid chain; its full sequence is Sulfate/thiosulfate import ATP-binding protein CysA (343 aa).

Residues 3-237 (IRISHLRKQF…PASPFVYSFV (235 aa)) enclose the ABC transporter domain. 35–42 (GPSGSGKT) is an ATP binding site.

The protein belongs to the ABC transporter superfamily. Sulfate/tungstate importer (TC 3.A.1.6) family. The complex is composed of two ATP-binding proteins (CysA), two transmembrane proteins (CysT and CysW) and a solute-binding protein (CysP).

The protein resides in the cell inner membrane. It carries out the reaction sulfate(out) + ATP + H2O = sulfate(in) + ADP + phosphate + H(+). It catalyses the reaction thiosulfate(out) + ATP + H2O = thiosulfate(in) + ADP + phosphate + H(+). Its function is as follows. Part of the ABC transporter complex CysAWTP involved in sulfate/thiosulfate import. Responsible for energy coupling to the transport system. The polypeptide is Sulfate/thiosulfate import ATP-binding protein CysA (Xanthomonas campestris pv. campestris (strain ATCC 33913 / DSM 3586 / NCPPB 528 / LMG 568 / P 25)).